The primary structure comprises 100 residues: uncharacterized protein (100 aa).

It localises to the secreted. This is an uncharacterized protein from Mycobacterium leprae (strain TN).